The following is a 348-amino-acid chain: S-adenosylmethionine:tRNA ribosyltransferase-isomerase (348 aa).

It belongs to the QueA family. In terms of assembly, monomer.

The protein localises to the cytoplasm. It carries out the reaction 7-aminomethyl-7-carbaguanosine(34) in tRNA + S-adenosyl-L-methionine = epoxyqueuosine(34) in tRNA + adenine + L-methionine + 2 H(+). Its pathway is tRNA modification; tRNA-queuosine biosynthesis. In terms of biological role, transfers and isomerizes the ribose moiety from AdoMet to the 7-aminomethyl group of 7-deazaguanine (preQ1-tRNA) to give epoxyqueuosine (oQ-tRNA). The protein is S-adenosylmethionine:tRNA ribosyltransferase-isomerase of Cytophaga hutchinsonii (strain ATCC 33406 / DSM 1761 / CIP 103989 / NBRC 15051 / NCIMB 9469 / D465).